The primary structure comprises 135 residues: Phosphoinositide-interacting protein (135 aa).

A disordered region spans residues 1–21 (MEVLPKALEVDERSPESKDLL). Positions 8–19 (LEVDERSPESKD) are enriched in basic and acidic residues. 2 consecutive transmembrane segments (helical) span residues 54 to 74 (IIIMSVGAAILLFGVAITCVA) and 92 to 112 (PAFLSLGLMMLVCGLVWVPII).

As to quaternary structure, interacts with TRPV1. As to expression, strongly expressed in most dorsal root ganglia (DRG) and trigeminal neurons. Expressed by most peptidergic (CGRP+) and non-peptidergic (IB4+) DRG neurons. Weakly expressed in other parts of the peripheral nervous system (PNS) including sympathetic and enteric neurons. Not expressed in the spinal cord.

It localises to the membrane. In terms of biological role, regulatory subunit of TRPV1, a molecular sensor of noxious heat and capsaicin. Positively regulates TRPV1 channel activity via phosphatidylinositol 4,5-bisphosphate (PIP2). Binds various phosphoinositide, including phosphatidylinositol 4,5-bisphosphate (PIP2), but not phosphatidylinositol (PI). The polypeptide is Phosphoinositide-interacting protein (Pirt) (Mus musculus (Mouse)).